The sequence spans 1159 residues: ATP-dependent helicase/deoxyribonuclease subunit B (1159 aa).

In terms of domain architecture, UvrD-like helicase ATP-binding spans 1–401; sequence MSIRFVYGRS…LLKNWSYESV (401 aa). Position 8-15 (8-15) interacts with ATP; sequence GRSGTGKS. The 304-residue stretch at 279-582 folds into the UvrD-like helicase C-terminal domain; that stretch reads PYRFKGNLEL…NIGDIARIKG (304 aa). The [4Fe-4S] cluster site is built by Cys787, Cys1106, Cys1109, and Cys1115.

It belongs to the helicase family. AddB/RexB type 1 subfamily. Heterodimer of AddA and AddB. The cofactor is Mg(2+). [4Fe-4S] cluster is required as a cofactor.

Functionally, the heterodimer acts as both an ATP-dependent DNA helicase and an ATP-dependent, dual-direction single-stranded exonuclease. Recognizes the chi site generating a DNA molecule suitable for the initiation of homologous recombination. The AddB subunit has 5' -&gt; 3' nuclease activity but not helicase activity. This is ATP-dependent helicase/deoxyribonuclease subunit B from Clostridium beijerinckii (strain ATCC 51743 / NCIMB 8052) (Clostridium acetobutylicum).